A 541-amino-acid polypeptide reads, in one-letter code: MKMSKEGKQSKRTLLITGLIIAMFFSALDGTIVGTAMPKIVGDLGGLSMMTWLTTAYLLTSTTIVPIAGKLADLLGRRIVYVSGLIIFMAASALCGMANNMTELIIFRGLQGIGGGIMMPMAMIVIGDLFTGKQRAKFQGVFGAIYGLASVIGPQIGGWIVDSLNWKWVFYINLPVGIIAVIFIARGLQGRQQTGPINFDIAGIFTMIVGVVSLLLALSFGGKDYAWDSWQILGLFALALIGIVSFIIVESKAKEPILPMYLFKNRTFTFLNLIGFFMSIGMFGAITFVPFFMQGIVGVSASESGTIMTPMMISMIITSIIGGQLVYKIGIKPQIITGMLVMAGGFLLLTTLDLDTSKLVATSFMAIIGLGMGLVMPILTLALQESFSKEELGVVTSSSQFFRSIGGTFGITMLGAVMNARSGNLLTDKLVPYLDSLPAQASSFAAQLKGMIDTNPQGLLQSLFSPDAVKQIPAAFSSHIVPILKTSLMDSLHSVFYTGLIFIAVGAVFTLFLKPIKLSNKKAEDQQEKEKAAKAVESPSH.

Helical transmembrane passes span Leu-14–Gly-34, Ile-40–Thr-60, Ile-79–Asn-99, Gly-112–Gly-132, Val-141–Val-161, Trp-168–Leu-188, Ile-201–Gly-221, Ser-229–Val-249, Leu-273–Met-293, Ile-307–Tyr-327, Ile-329–Leu-349, Leu-359–Leu-379, Phe-401–Ala-420, and Leu-492–Phe-512.

This sequence belongs to the major facilitator superfamily. EmrB family.

The protein resides in the cell membrane. Functionally, multidrug efflux transporter. Contributes to resistance to several antibiotics, including fusidic acid, novobiocin, streptomycin and actinomycin, possibly by pumping these structurally unrelated antibiotics out of cells. The sequence is that of Multidrug transporter protein MdtP from Bacillus subtilis (strain 168).